The chain runs to 20 residues: Manganese peroxidase H5 (20 aa).

It belongs to the peroxidase family. Ligninase subfamily.

It is found in the secreted. The enzyme catalyses 2 Mn(2+) + H2O2 + 2 H(+) = 2 Mn(3+) + 2 H2O. In terms of biological role, catalyzes the oxidation of Mn(2+) to Mn(3+). The latter, acting as a diffusible redox mediator, is capable of oxidizing a variety of lignin compounds. The polypeptide is Manganese peroxidase H5 (Phanerodontia chrysosporium (White-rot fungus)).